The sequence spans 968 residues: Probable histidine kinase 1 (968 aa).

Coiled coils occupy residues 89–120 (LLKE…FQDE) and 169–204 (KERA…QSHT). One can recognise a Histidine kinase domain in the interval 372-655 (TMSHEIRSPL…TFSFVLPCKI (284 aa)). Histidine 375 carries the phosphohistidine; by autocatalysis modification. The tract at residues 737–757 (STNSASTAHQSNGPSVSRTNK) is disordered. Residues 738–754 (TNSASTAHQSNGPSVSR) show a composition bias toward polar residues. The 148-residue stretch at 818–965 (KILLVEDNKV…NIKECLQQYL (148 aa)) folds into the Response regulatory domain. The residue at position 867 (aspartate 867) is a 4-aspartylphosphate.

In terms of processing, activation probably requires a transfer of a phosphate group between a His in the transmitter domain and an Asp of the receiver domain.

It carries out the reaction ATP + protein L-histidine = ADP + protein N-phospho-L-histidine.. Its function is as follows. Cytokinin receptor related to bacterial two-component regulators. Functions as a histidine kinase and transmits the stress signal to a downstream MAPK cascade. The sequence is that of Probable histidine kinase 1 from Oryza sativa subsp. indica (Rice).